The primary structure comprises 303 residues: Quinolinate synthase (303 aa).

Iminosuccinate-binding residues include His-24 and Ser-41. Cys-86 contacts [4Fe-4S] cluster. Iminosuccinate contacts are provided by residues 112 to 114 (YIN) and Ser-129. Cys-172 is a binding site for [4Fe-4S] cluster. Iminosuccinate is bound by residues 198–200 (HPE) and Thr-215. [4Fe-4S] cluster is bound at residue Cys-260.

Belongs to the quinolinate synthase family. Type 2 subfamily. The cofactor is [4Fe-4S] cluster.

The protein resides in the cytoplasm. The catalysed reaction is iminosuccinate + dihydroxyacetone phosphate = quinolinate + phosphate + 2 H2O + H(+). It functions in the pathway cofactor biosynthesis; NAD(+) biosynthesis; quinolinate from iminoaspartate: step 1/1. Functionally, catalyzes the condensation of iminoaspartate with dihydroxyacetone phosphate to form quinolinate. The protein is Quinolinate synthase of Caldicellulosiruptor saccharolyticus (strain ATCC 43494 / DSM 8903 / Tp8T 6331).